Reading from the N-terminus, the 349-residue chain is Probable formaldehyde dehydrogenase AdhA (349 aa).

Positions 44, 66, 97, 100, 103, 111, and 161 each coordinate Zn(2+).

Belongs to the zinc-containing alcohol dehydrogenase family. Requires Zn(2+) as cofactor.

Functionally, functions in the protection against aldehyde-stress. This Bacillus subtilis (strain 168) protein is Probable formaldehyde dehydrogenase AdhA (adhA).